We begin with the raw amino-acid sequence, 89 residues long: Small ribosomal subunit protein uS15 (89 aa).

This sequence belongs to the universal ribosomal protein uS15 family. Part of the 30S ribosomal subunit. Forms a bridge to the 50S subunit in the 70S ribosome, contacting the 23S rRNA.

In terms of biological role, one of the primary rRNA binding proteins, it binds directly to 16S rRNA where it helps nucleate assembly of the platform of the 30S subunit by binding and bridging several RNA helices of the 16S rRNA. Functionally, forms an intersubunit bridge (bridge B4) with the 23S rRNA of the 50S subunit in the ribosome. The sequence is that of Small ribosomal subunit protein uS15 from Acidiphilium cryptum (strain JF-5).